The primary structure comprises 372 residues: Glutamate 5-kinase (372 aa).

An ATP-binding site is contributed by K14. Substrate contacts are provided by S54, D141, and N153. ATP is bound at residue 173–174; that stretch reads TD. One can recognise a PUA domain in the interval 280 to 358; the sequence is RGHVVIDAGA…GEIEIVLGYM (79 aa).

The protein belongs to the glutamate 5-kinase family.

The protein localises to the cytoplasm. The catalysed reaction is L-glutamate + ATP = L-glutamyl 5-phosphate + ADP. Its pathway is amino-acid biosynthesis; L-proline biosynthesis; L-glutamate 5-semialdehyde from L-glutamate: step 1/2. In terms of biological role, catalyzes the transfer of a phosphate group to glutamate to form L-glutamate 5-phosphate. The protein is Glutamate 5-kinase of Burkholderia orbicola (strain MC0-3).